Here is a 377-residue protein sequence, read N- to C-terminus: Prolargin (377 aa).

The signal sequence occupies residues 1 to 21 (MRASFFWFLPLLLILASVAQG). Residues 22 to 61 (QPRPKPGIRRKPKPRPTPSFPQPHEPAEPTDLPPPLPPGP) form a disordered region. Pro residues-rich tracts occupy residues 36–45 (RPTPSFPQPH) and 52–61 (DLPPPLPPGP). LRR repeat units lie at residues 90–109 (RKVPIIPPRIHYLYLQNNFI), 110–133 (TELPVESFKNATGLRWINLDNNRI), 134–157 (RKVDQRVLEKLPGLAFLYMDKNQL), 158–178 (EEVPSALPRNLEQLRLSQNLI), 179–202 (SRIPPGVFSKLENLLLLDLQHNRL), 203–228 (SDGVFKADTFQGLKNLMQLNLAHNIL), 229–249 (RRMPPKVPPAIHQLYLDSNKI), 250–273 (ETIPSGYFKDFPNLAFIRMNYNKL), 274–298 (SDRGLPKNSFNISNLLVLHLSHNKI), 299–318 (SNVPAISNKLEHLYLNNNSI), 319–357 (EKINGTQICPSNLVAFHDFSSDLENVPHLRYLRLDGNFL), and 358–377 (KPPIPLDLMMCFRLLQSVVI). N-linked (GlcNAc...) asparagine glycosylation occurs at asparagine 119. Asparagine 284, asparagine 315, and asparagine 322 each carry an N-linked (GlcNAc...) asparagine glycan. Cysteine 327 and cysteine 368 are disulfide-bonded.

The protein belongs to the small leucine-rich proteoglycan (SLRP) family. SLRP class II subfamily. Binds the basement membrane heparan sulfate proteoglycan perlecan and triple helical collagens type I and type II. In terms of processing, glycosylated; contains heparan sulfate.

Its subcellular location is the secreted. The protein localises to the extracellular space. It is found in the extracellular matrix. Functionally, may anchor basement membranes to the underlying connective tissue. This chain is Prolargin (Prelp), found in Rattus norvegicus (Rat).